A 202-amino-acid polypeptide reads, in one-letter code: Small ribosomal subunit protein uS4 (202 aa).

In terms of domain architecture, S4 RNA-binding spans 91-157; that stretch reads CRLDNVVYRA…TPFIVARETH (67 aa).

The protein belongs to the universal ribosomal protein uS4 family. In terms of assembly, part of the 30S ribosomal subunit. Contacts protein S5. The interaction surface between S4 and S5 is involved in control of translational fidelity.

In terms of biological role, one of the primary rRNA binding proteins, it binds directly to 16S rRNA where it nucleates assembly of the body of the 30S subunit. Functionally, with S5 and S12 plays an important role in translational accuracy. This Nocardioides sp. (strain ATCC BAA-499 / JS614) protein is Small ribosomal subunit protein uS4.